The sequence spans 229 residues: ATP-dependent dethiobiotin synthetase BioD (229 aa).

12–17 (GVGKTV) contacts ATP. Thr-16 lines the Mg(2+) pocket. The active site involves Lys-37. Thr-41 lines the substrate pocket. Residues Asp-53, 112-115 (EGAG), and 201-203 (PAG) each bind ATP. The Mg(2+) site is built by Asp-53 and Glu-112.

This sequence belongs to the dethiobiotin synthetase family. Homodimer. Mg(2+) serves as cofactor.

The protein resides in the cytoplasm. It carries out the reaction (7R,8S)-7,8-diammoniononanoate + CO2 + ATP = (4R,5S)-dethiobiotin + ADP + phosphate + 3 H(+). It participates in cofactor biosynthesis; biotin biosynthesis; biotin from 7,8-diaminononanoate: step 1/2. Functionally, catalyzes a mechanistically unusual reaction, the ATP-dependent insertion of CO2 between the N7 and N8 nitrogen atoms of 7,8-diaminopelargonic acid (DAPA, also called 7,8-diammoniononanoate) to form a ureido ring. In Mycobacterium sp. (strain JLS), this protein is ATP-dependent dethiobiotin synthetase BioD.